We begin with the raw amino-acid sequence, 384 residues long: A-type ATP synthase subunit C (384 aa).

The protein belongs to the V-ATPase V0D/AC39 subunit family. In terms of assembly, has multiple subunits with at least A(3), B(3), C, D, E, F, H, I and proteolipid K(x).

The protein resides in the cell membrane. In terms of biological role, component of the A-type ATP synthase that produces ATP from ADP in the presence of a proton gradient across the membrane. This is A-type ATP synthase subunit C from Methanobrevibacter smithii (strain ATCC 35061 / DSM 861 / OCM 144 / PS).